Here is a 119-residue protein sequence, read N- to C-terminus: Small ribosomal subunit protein bS6 (119 aa).

This sequence belongs to the bacterial ribosomal protein bS6 family.

Functionally, binds together with bS18 to 16S ribosomal RNA. This Thermosipho africanus (strain TCF52B) protein is Small ribosomal subunit protein bS6.